A 415-amino-acid polypeptide reads, in one-letter code: S-inosyl-L-homocysteine hydrolase (415 aa).

Substrate-binding residues include Asp-123 and Glu-148. Thr-149 to Thr-151 is a binding site for NAD(+). Substrate is bound by residues Lys-178 and Asp-182. NAD(+) is bound by residues Asn-183, Gly-212–Gly-217, Glu-235, Ala-291–His-293, and Asn-337.

The protein belongs to the adenosylhomocysteinase family. As to quaternary structure, exists both as a homotetramer and a homodimer, in a 4:1 ratio. The cofactor is NAD(+).

The protein localises to the cytoplasm. The enzyme catalyses S-inosyl-L-homocysteine + H2O = L-homocysteine + inosine. It functions in the pathway amino-acid biosynthesis; S-adenosyl-L-methionine biosynthesis. Its function is as follows. Catalyzes the hydrolysis of S-inosyl-L-homocysteine (SIH) to L-homocysteine (Hcy) and inosine. Likely functions in a S-adenosyl-L-methionine (SAM) recycling pathway from S-adenosyl-L-homocysteine (SAH) produced from SAM-dependent methylation reactions. Can also catalyze the reverse reaction in vitro, i.e. the synthesis of SIH from Hcy and inosine. Is specific for SIH and inosine as it is unable to either hydrolyze SAH or synthesize SAH from adenosine and Hcy. The polypeptide is S-inosyl-L-homocysteine hydrolase (Methanocaldococcus jannaschii (strain ATCC 43067 / DSM 2661 / JAL-1 / JCM 10045 / NBRC 100440) (Methanococcus jannaschii)).